Consider the following 311-residue polypeptide: Malate dehydrogenase (311 aa).

Residues Gly-7–Gly-13 and Asp-34 contribute to the NAD(+) site. Positions 81 and 87 each coordinate substrate. NAD(+)-binding positions include Asn-94 and Ile-117–Asn-119. Substrate-binding residues include Asn-119 and Arg-153. Catalysis depends on His-177, which acts as the Proton acceptor. Met-227 contacts NAD(+).

This sequence belongs to the LDH/MDH superfamily. MDH type 1 family. Homodimer.

It carries out the reaction (S)-malate + NAD(+) = oxaloacetate + NADH + H(+). Functionally, catalyzes the reversible oxidation of malate to oxaloacetate. This is Malate dehydrogenase from Aeromonas salmonicida (strain A449).